The sequence spans 313 residues: uncharacterized protein (313 aa).

The next 2 helical transmembrane spans lie at 42-64 (LVVLFNGALLLLCMGTGYVLFLT) and 74-96 (VRAYGIFFLIFLLLFLLINTLYV).

It is found in the cell membrane. This is an uncharacterized protein from Treponema pallidum (strain Nichols).